The sequence spans 3412 residues: MAGKAILKGKGGGPPRRVSKETAKKTRQSRVQMPNGLVLMRMMGILWHAVAGTARSPVLKSFWKSVPLKQATAALRKIKKAVSTLMVGLQRRGKRRSAVDWTGWLLVVVLLGVTLAATVRKERDGTTVIRAEGKDAATQVRVENGTCVILATDMGSWCDDSLTYECVTIDQGEEPVDVDCSCRNVDGVYLEYGRCGKQEGSRTRRSVLIPSHAQGDLTGRGHKWLEGDSLRTHLTRVEGWVWKNKVLTLAVIAVVWLTVESVVTRVAVVVVLLCLAPVYASRCTHLENRDFVTGTQGTTRVTLVLELGGCVTITAEGKPSMDVWLDSIYQENPAKTREYCLHAKLSDTKVAARCPTMGPATLAEEHQSGTVCKRDQSDRGWGNHCGLFGKGSIVTCVKASCEAKKKATGHVYDANKIVYTVKVEPHTGDYVAANETHSGRKTASFTVSSERTILTMGDYGDVSLLCRVASGVDLAQTVILELDKTSEHLPTAWQVHRDWFNDLALPWKHEGAQNWNNAERLVEFGAPHAVKMDVYNLGDQTGVLLKSLAGVPVAHIDGTKYHLKSGHVTCEVGLEKLKMKGLTYTMCDKTKFTWKRIPTDSGHDTVVMEVAFSGTKPCRIPVRAVAHGSPDVNVAMLMTPNPTIENNGGGFIEMQLPPGDNIIYVGELSHQWFQKGSSIGRVFQKTRKGIERLTVIGEHAWDFGSTGGFLTSVGKALHTVLGGAFNSLFGGVGFLPKILVGVVLAWLGLNMRNPTMSMSFLLAGGLVLAMTLGVGADVGCAVDTERMELRCGEGLVVWREVSEWYDNYAYYPETLGALASAIKETFEEGTCGIVPQNRLEMAMWRSSATELNLALVEGDANLTVVVDKLDPTDYRGGIPSLLKKGKDIKVSWKSWGHSMIWSVPEAPRLFMVGTEGSSECPLERRKTGVFTVAEFGVGLRTKVFLDFRQESTHECDTGVMGAAVKNGMAVHTDQSLWMKSVRNDTGTYIVELLVTDLRNCSWPASHTIDNAEVVDSELFLPASLAGPRSWYNRIPGYSEQVKGPWKYSPIRVTREECPGTRVTINADCDKRGASVRSTTESGKVIPEWCCRTCTLPPVTFRTGTDCWYAMEIRPVHDQGGLVRSMVVADNGELLSEGGIPGIVALFVVLEYVIRRRPATGTTAMWGGIVVLALLVTGLVKIESLVRYVVAVGITFHLELGPEIVALTLLQAVFELRVGLLSAFALRSNLTVREMVTIYFLLLVLELGLPSEGLGALWKWGDALAMGALIFRACTAEEKTGVGLLLMALMTQQDLATVHYGLMLFLGVASCCSIWKLIRGHREQKGLTWIVPLAGLLGGEGSGVRLVAFWELTVHGRRRSFSEPLTVVGVMLTLASGMIRHTSQEALCALAVASFLLLMLVLGTRKMQLVAEWSGCVEWHPELMNEGGEVSLRVRQDSMGNFHLTELEKEERVMAFWLLAGLAASAFHWSGILGVMGLWTLSEMLRTARRSGLVFSGQGGRERGDRPFEVKDGVYRIFSPGLLWGQRQVGVGYGSKGVLHTMWHVTRGAALSIDDAVAGPYWADVKEDVVCYGGAWSLEEKWKGETVQVHAFPPGRAHEVHQCQPGELLLDTGRRIGAVPIDLAKGTSGSPILNSQGVVVGLYGNGLKTNETYVSSIAQGEAEKSRPNLPPAVTGTGWTAKGQITVLDMHPGSGKTHRVLPELIRQCIDRRLRTLVLAPTRVVLKEMERALNGKRVRFHSPAVGDQQVGGSIVDVMCHATYVNRRLLPQGRQNWEVAIMDEAHWTDPHSIAARGHLYTLAKENKCALVLMTATPPGKSEPFPESNGAISSEEKQIPDGEWRDGFDWITEYEGRTAWFVPSSAKGGIIARTLIQKGKSVICLNSKTFEKDYSRVRDEKPDFVVTTDISEMGANLDVSRVIDGRTNIKPEEVDGRVELTGTRRVTTASAAQRRGRVGRQEGRTDEYIYSGQCDDDDSGLVQWKEAQILLDNITTLRGPVATFYGPEQDKMPEVAGHFRLTEEKRKHFRHLLTHCDFTPWLAWHVAANVSSVTSRNWTWEGPEENTVDEANGDLVTFRSPNGAERTLRPVWRDARMFREGRDIREFVAYASGRRSFGDVLSGMSGVPELLRHRCVSAMDVFYTLMHEEPGSRAMKMAERDAPEAFLTVVEMMVLGLATLGVVWCFVVRTSISRMMLGTLVLLASLALLWAGGVSYGNMAGVALIFYTLLTVLQPEAGKQRSSDDNKLAYFLLTLCSLAGLVAANEMGFLEKTKADLSTVLWSEHEELRSWEEWTNIDIQPARSWGTYVLVVSLFTPYIIHQLQTKIQQLVNSAVATGAQAMRDLGGGAPFFGVAGHVMALGVVSLVGATPTSLVVGVGLAAFHLAIVVSGLEAELTQRAHKVFFSAMVRNPMVDGDVINPFGEGEAKPALYERKMSLVLAIVLCLMSVVMNRTVPSTPRLLLWDWRQRDNCSNQRRTPFGRCQACGLSGVVRGSLWGFCPLGHRLWLRASGSRRGGSEGDTLGDLWKRKLNGCTKEEFFAYRRTGILETERDKARELLKRGETNMGLAVSRGTAKLAWLEERGYATLKGEVVDLGCGRGGWSYYAASRPAVMSVKACAIAGKGHETPKMVTSLGWNLIKFRAGMDVFSMQPHRADTIMCDIGESNPDAVVEGERTRKVILLMEQWKNRNPTATCVFKALAPYRPEVTEALHRFQLQWGGGLVRTPFSRNSTHEMYYSTAITGNIVNSVNIQSRKLLARFGDQRGPTRVPELDLGVGTRCVVLAEDKVKEKDVQERISALREQYGETWHMDREHPYRTWQYWAATACANRVGGALINGVVKLLSWPWNAREDVVRMAMTDTTAFGQQRVFKEKVDTKAQEPQPGTKVIMRAVNDWILERLARKSKPRMCSREEFIAKVKSNAALGAWSDEQNRWSSAKEAVEDPAFWQLVDEERERHLAGRCAHCVYNMMGKREKKLGEFGVAKGSRAIWYMWLGSRFLEFEALGFLNEDHWASRGSSGSGVEGISLNYLGWHLKGLSTLEGGLFYADDTAGWDTKVTNADLEDEEQLLRYMEGEHKQLAATIMQKAYHAKVVKVARPSRDGGCIMDVITRRDQRGSGQVVTYALNTLTNIKVQLIRMMEGEGVIEASDAHNPRLLRVERWLRDHGEERLGRMLVSGDDCVVRPVDDRFSGALYFLNDMAKTRKDIGEWDHSVGFSNWEEVPFCSHHFHELVMKDGRTLIVPCRDQDELVGRARVSPGCGRSVRETACLSKAYGQMWLLSYFHRRDLRTLGLAICSAVPVDWVPAGRTTWSIHASGAWMTTEDMLDVWNRVWILDNPFMHSKEKIAEWRDVPYLPKSHDMLCSSLVGRKERAEWAKNIWGAVEKVRKMIGQEKFKDYLSCMDRHDLHWESKLESSII.

The tract at residues 1 to 30 (MAGKAILKGKGGGPPRRVSKETAKKTRQSR) is disordered. Residues 1-98 (MAGKAILKGK…LQRRGKRRSA (98 aa)) lie on the Cytoplasmic side of the membrane. The propeptide at 97 to 117 (SAVDWTGWLLVVVLLGVTLAA) is ER anchor for the capsid protein C, removed in mature form by serine protease NS3. The helical transmembrane segment at 99–119 (VDWTGWLLVVVLLGVTLAATV) threads the bilayer. At 120-242 (RKERDGTTVI…HLTRVEGWVW (123 aa)) the chain is on the extracellular side. A glycan (N-linked (GlcNAc...) asparagine; by host) is linked at asparagine 144. Residues 243-260 (KNKVLTLAVIAVVWLTVE) traverse the membrane as a helical segment. Serine 261 is a topological domain (cytoplasmic). The helical transmembrane segment at 262–280 (VVTRVAVVVVLLCLAPVYA) threads the bilayer. Topologically, residues 281-727 (SRCTHLENRD…HTVLGGAFNS (447 aa)) are extracellular. Cystine bridges form between cysteine 283/cysteine 310, cysteine 340/cysteine 396, cysteine 340/cysteine 401, cysteine 354/cysteine 385, cysteine 372/cysteine 396, and cysteine 372/cysteine 401. Residues 378–391 (DRGWGNHCGLFGKG) are fusion peptide. An N-linked (GlcNAc...) asparagine; by host glycan is attached at asparagine 434. 2 disulfides stabilise this stretch: cysteine 466-cysteine 570 and cysteine 587-cysteine 618. The chain crosses the membrane as a helical span at residues 728-748 (LFGGVGFLPKILVGVVLAWLG). At 749–755 (LNMRNPT) the chain is on the cytoplasmic side. Residues 756–776 (MSMSFLLAGGLVLAMTLGVGA) traverse the membrane as a helical segment. Topologically, residues 777–1187 (DVGCAVDTER…LVKIESLVRY (411 aa)) are extracellular. 6 disulfides stabilise this stretch: cysteine 780–cysteine 791, cysteine 831–cysteine 920, cysteine 955–cysteine 1000, cysteine 1057–cysteine 1106, cysteine 1068–cysteine 1090, and cysteine 1089–cysteine 1093. 3 N-linked (GlcNAc...) asparagine; by host glycosylation sites follow: asparagine 861, asparagine 983, and asparagine 999. A helical transmembrane segment spans residues 1188-1208 (VVAVGITFHLELGPEIVALTL). Over 1209 to 1236 (LQAVFELRVGLLSAFALRSNLTVREMVT) the chain is Cytoplasmic. A helical membrane pass occupies residues 1237–1257 (IYFLLLVLELGLPSEGLGALW). At 1258–1293 (KWGDALAMGALIFRACTAEEKTGVGLLLMALMTQQD) the chain is on the lumenal side. Residues 1294-1314 (LATVHYGLMLFLGVASCCSIW) form a helical membrane-spanning segment. The Cytoplasmic segment spans residues 1315–1327 (KLIRGHREQKGLT). Residues 1328–1348 (WIVPLAGLLGGEGSGVRLVAF) traverse the membrane as a helical segment. Residues 1349–1359 (WELTVHGRRRS) lie on the Cytoplasmic side of the membrane. The chain crosses the membrane as a helical span at residues 1360–1378 (FSEPLTVVGVMLTLASGMI). The Lumenal portion of the chain corresponds to 1379–1382 (RHTS). The helical transmembrane segment at 1383–1403 (QEALCALAVASFLLLMLVLGT) threads the bilayer. Residues 1404 to 1454 (RKMQLVAEWSGCVEWHPELMNEGGEVSLRVRQDSMGNFHLTELEKEERVMA) are Cytoplasmic-facing. An interacts with and activates NS3 protease region spans residues 1410 to 1449 (AEWSGCVEWHPELMNEGGEVSLRVRQDSMGNFHLTELEKE). The helical intramembrane region spans 1455-1475 (FWLLAGLAASAFHWSGILGVM). Residues 1476–2160 (GLWTLSEMLR…KMAERDAPEA (685 aa)) lie on the Cytoplasmic side of the membrane. Residues 1490–1669 (SGLVFSGQGG…EAEKSRPNLP (180 aa)) form the Peptidase S7 domain. Active-site charge relay system; for serine protease NS3 activity residues include histidine 1543, aspartate 1567, and serine 1627. The Helicase ATP-binding domain occupies 1675–1831 (TGWTAKGQIT…ESNGAISSEE (157 aa)). 1688–1695 (MHPGSGKT) contributes to the ATP binding site. Positions 1779 to 1782 (DEAH) match the DEAH box motif. Positions 1841 to 2000 (DGFDWITEYE…TLRGPVATFY (160 aa)) constitute a Helicase C-terminal domain. Residue lysine 1883 is modified to N6-acetyllysine; by host. Residues 2161 to 2181 (FLTVVEMMVLGLATLGVVWCF) traverse the membrane as a helical segment. Topologically, residues 2182–2189 (VVRTSISR) are lumenal. Residues 2190 to 2210 (MMLGTLVLLASLALLWAGGVS) constitute an intramembrane region (helical). Tyrosine 2211 is a topological domain (lumenal). Residues 2212 to 2232 (GNMAGVALIFYTLLTVLQPEA) traverse the membrane as a helical segment. Residues 2233–2244 (GKQRSSDDNKLA) are Cytoplasmic-facing. The chain crosses the membrane as a helical span at residues 2245-2265 (YFLLTLCSLAGLVAANEMGFL). Topologically, residues 2266–2299 (EKTKADLSTVLWSEHEELRSWEEWTNIDIQPARS) are lumenal. Positions 2300-2320 (WGTYVLVVSLFTPYIIHQLQT) form an intramembrane region, helical. Topologically, residues 2321–2343 (KIQQLVNSAVATGAQAMRDLGGG) are lumenal. The segment at residues 2344–2364 (APFFGVAGHVMALGVVSLVGA) is an intramembrane region (helical). The Lumenal portion of the chain corresponds to 2365-2368 (TPTS). The helical transmembrane segment at 2369–2389 (LVVGVGLAAFHLAIVVSGLEA) threads the bilayer. Over 2390–2430 (ELTQRAHKVFFSAMVRNPMVDGDVINPFGEGEAKPALYERK) the chain is Cytoplasmic. The chain crosses the membrane as a helical span at residues 2431 to 2451 (MSLVLAIVLCLMSVVMNRTVP). Residues 2452–2476 (STPRLLLWDWRQRDNCSNQRRTPFG) are Lumenal-facing. Residues 2477–2497 (RCQACGLSGVVRGSLWGFCPL) form a helical membrane-spanning segment. At 2498–3412 (GHRLWLRASG…WESKLESSII (915 aa)) the chain is on the cytoplasmic side. The mRNA cap 0-1 NS5-type MT domain occupies 2511 to 2775 (GGSEGDTLGD…ELDLGVGTRC (265 aa)). Serine 2566 contributes to the S-adenosyl-L-methionine binding site. Serine 2566 carries the post-translational modification Phosphoserine. Lysine 2571 functions as the For 2'-O-MTase activity in the catalytic mechanism. Residues glycine 2596, tryptophan 2597, isoleucine 2615, aspartate 2641, and valine 2642 each contribute to the S-adenosyl-L-methionine site. Aspartate 2656 serves as the catalytic For 2'-O-MTase activity. An S-adenosyl-L-methionine-binding site is contributed by isoleucine 2657. Active-site for 2'-O-MTase activity residues include lysine 2693 and glutamate 2729. The segment at 2729–2733 (EMYYS) is interaction with host SCRIB. An S-adenosyl-L-methionine-binding site is contributed by tyrosine 2731. Glutamate 2948, histidine 2952, cysteine 2957, and cysteine 2960 together coordinate Zn(2+). Residues 3038-3187 (GLFYADDTAG…RPVDDRFSGA (150 aa)) enclose the RdRp catalytic domain. Zn(2+) is bound by residues histidine 3222, cysteine 3238, and cysteine 3357.

This sequence in the N-terminal section; belongs to the class I-like SAM-binding methyltransferase superfamily. mRNA cap 0-1 NS5-type methyltransferase family. In terms of assembly, homodimer. Interacts (via N-terminus) with host EXOC1 (via C-terminus); this interaction results in EXOC1 degradation through the proteasome degradation pathway. Forms heterodimers with envelope protein E in the endoplasmic reticulum and Golgi. As to quaternary structure, homodimer; in the endoplasmic reticulum and Golgi. Interacts with protein prM. Interacts with non-structural protein 1. In terms of assembly, homodimer; Homohexamer when secreted. Interacts with envelope protein E. Interacts (via N-terminus) with serine protease NS3. As to quaternary structure, forms a heterodimer with serine protease NS3. May form homooligomers. In terms of assembly, forms a heterodimer with NS2B. Interacts with non-structural protein 2A (via N-terminus). Interacts with NS4B. Interacts with unphosphorylated RNA-directed RNA polymerase NS5; this interaction stimulates RNA-directed RNA polymerase NS5 guanylyltransferase activity. Interacts with serine protease NS3. Interacts with NS1. As to quaternary structure, homodimer. Interacts with host STAT2; this interaction inhibits the phosphorylation of the latter, and, when all viral proteins are present (polyprotein), targets STAT2 for degradation. Interacts with serine protease NS3. Interacts with host SCRIB; this interaction targets NS5 to the cell membrane periphery and nucleus, thereby allowing efficient host nuclear STAT1 inhibition. In terms of processing, specific enzymatic cleavages in vivo yield mature proteins. Cleavages in the lumen of endoplasmic reticulum are performed by host signal peptidase, whereas cleavages in the cytoplasmic side are performed by serine protease NS3. Signal cleavage at the 2K-4B site requires a prior NS3 protease-mediated cleavage at the 4A-2K site. Cleaved in post-Golgi vesicles by a host furin, releasing the mature small envelope protein M, and peptide pr. This cleavage is incomplete as up to 30% of viral particles still carry uncleaved prM. Post-translationally, N-glycosylated. In terms of processing, N-glycosylated. The excreted form is glycosylated and this is required for efficient secretion of the protein from infected cells. Acetylated by host KAT5. Acetylation modulates NS3 RNA-binding and unwinding activities and plays an important positive role for viral replication. Post-translationally, phosphorylated on serines residues. This phosphorylation may trigger NS5 nuclear localization.

Its subcellular location is the virion. The protein resides in the host nucleus. It localises to the host cytoplasm. It is found in the host perinuclear region. The protein localises to the secreted. Its subcellular location is the virion membrane. The protein resides in the host endoplasmic reticulum membrane. It catalyses the reaction Selective hydrolysis of -Xaa-Xaa-|-Yaa- bonds in which each of the Xaa can be either Arg or Lys and Yaa can be either Ser or Ala.. It carries out the reaction RNA(n) + a ribonucleoside 5'-triphosphate = RNA(n+1) + diphosphate. The enzyme catalyses a ribonucleoside 5'-triphosphate + H2O = a ribonucleoside 5'-diphosphate + phosphate + H(+). The catalysed reaction is ATP + H2O = ADP + phosphate + H(+). It catalyses the reaction a 5'-end (5'-triphosphoguanosine)-ribonucleoside in mRNA + S-adenosyl-L-methionine = a 5'-end (N(7)-methyl 5'-triphosphoguanosine)-ribonucleoside in mRNA + S-adenosyl-L-homocysteine. It carries out the reaction a 5'-end (N(7)-methyl 5'-triphosphoguanosine)-ribonucleoside in mRNA + S-adenosyl-L-methionine = a 5'-end (N(7)-methyl 5'-triphosphoguanosine)-(2'-O-methyl-ribonucleoside) in mRNA + S-adenosyl-L-homocysteine + H(+). Plays a role in virus budding by binding to the cell membrane and gathering the viral RNA into a nucleocapsid that forms the core of a mature virus particle. During virus entry, may induce genome penetration into the host cytoplasm after hemifusion induced by the surface proteins. Can migrate to the cell nucleus where it modulates host functions. Functionally, inhibits RNA silencing by interfering with host Dicer. Its function is as follows. Prevents premature fusion activity of envelope proteins in trans-Golgi by binding to envelope protein E at pH6.0. After virion release in extracellular space, gets dissociated from E dimers. In terms of biological role, acts as a chaperone for envelope protein E during intracellular virion assembly by masking and inactivating envelope protein E fusion peptide. prM is the only viral peptide matured by host furin in the trans-Golgi network probably to avoid catastrophic activation of the viral fusion activity in acidic Golgi compartment prior to virion release. prM-E cleavage is inefficient, and many virions are only partially matured. These uncleaved prM would play a role in immune evasion. May play a role in virus budding. Exerts cytotoxic effects by activating a mitochondrial apoptotic pathway through M ectodomain. May display a viroporin activity. Functionally, binds to host cell surface receptor and mediates fusion between viral and cellular membranes. Envelope protein is synthesized in the endoplasmic reticulum in the form of heterodimer with protein prM. They play a role in virion budding in the ER, and the newly formed immature particle is covered with 60 spikes composed of heterodimer between precursor prM and envelope protein E. The virion is transported to the Golgi apparatus where the low pH causes dissociation of PrM-E heterodimers and formation of E homodimers. prM-E cleavage is inefficient, and many virions are only partially matured. These uncleaved prM would play a role in immune evasion. Its function is as follows. Involved in immune evasion, pathogenesis and viral replication. Once cleaved off the polyprotein, is targeted to three destinations: the viral replication cycle, the plasma membrane and the extracellular compartment. Essential for viral replication. Required for formation of the replication complex and recruitment of other non-structural proteins to the ER-derived membrane structures. Excreted as a hexameric lipoparticle that plays a role against host immune response. Antagonizing the complement function. Binds to the host macrophages and dendritic cells. Inhibits signal transduction originating from Toll-like receptor 3 (TLR3). In terms of biological role, component of the viral RNA replication complex that functions in virion assembly and antagonizes the host immune response. Required cofactor for the serine protease function of NS3. May have membrane-destabilizing activity and form viroporins. Functionally, displays three enzymatic activities: serine protease, NTPase and RNA helicase. NS3 serine protease, in association with NS2B, performs its autocleavage and cleaves the polyprotein at dibasic sites in the cytoplasm: C-prM, NS2A-NS2B, NS2B-NS3, NS3-NS4A, NS4A-2K and NS4B-NS5. NS3 RNA helicase binds RNA and unwinds dsRNA in the 3' to 5' direction. Its function is as follows. Regulates the ATPase activity of the NS3 helicase activity. NS4A allows NS3 helicase to conserve energy during unwinding. In terms of biological role, functions as a signal peptide for NS4B and is required for the interferon antagonism activity of the latter. Induces the formation of ER-derived membrane vesicles where the viral replication takes place. Inhibits interferon (IFN)-induced host STAT1 phosphorylation and nuclear translocation, thereby preventing the establishment of cellular antiviral state by blocking the IFN-alpha/beta pathway. Inhibits STAT2 translocation in the nucleus after IFN-alpha treatment. Functionally, replicates the viral (+) and (-) genome, and performs the capping of genomes in the cytoplasm. NS5 methylates viral RNA cap at guanine N-7 and ribose 2'-O positions. Besides its role in RNA genome replication, also prevents the establishment of cellular antiviral state by blocking the interferon-alpha/beta (IFN-alpha/beta) signaling pathway. Inhibits host TYK2 and STAT2 phosphorylation, thereby preventing activation of JAK-STAT signaling pathway. The chain is Genome polyprotein from Homo sapiens (Human).